The following is a 299-amino-acid chain: Probable lipid kinase YegS (299 aa).

Positions 2-133 constitute a DAGKc domain; sequence AEFPASLLIL…IDMAQVNKQT (132 aa). ATP contacts are provided by residues Thr40, 66–72, and Thr95; that span reads GDGTINE. Mg(2+) contacts are provided by Leu215, Asp218, and Leu220. The Proton acceptor role is filled by Glu271.

The protein belongs to the diacylglycerol/lipid kinase family. YegS lipid kinase subfamily. Requires Mg(2+) as cofactor. The cofactor is Ca(2+).

The protein localises to the cytoplasm. Probably phosphorylates lipids; the in vivo substrate is unknown. The protein is Probable lipid kinase YegS of Shigella flexneri.